Reading from the N-terminus, the 63-residue chain is Arabinogalactan protein 22 (63 aa).

Residues 1–27 (MASLKFPLEILAVFVIISVILLPIAQS) form the signal peptide. 3 positions are modified to 4-hydroxyproline: proline 32, proline 34, and proline 36. O-linked (Ara...) hydroxyproline glycosylation is found at proline 32, proline 34, and proline 36. Serine 38 carries GPI-anchor amidated serine lipidation. A propeptide spans 39-63 (DGTSIDQGIAYVLMMVALALTYFIH) (removed in mature form).

This sequence belongs to the AG-peptide AGP family. Post-translationally, contains 4-hydroxyproline; hydroxylated on Pro-32, Pro-34 and Pro-36. In terms of processing, O-glycosylated on hydroxyprolines; noncontiguous hydroxylproline residues are glycosylated with arabinogalactan.

Its subcellular location is the cell membrane. Functionally, proteoglycan that seems to be implicated in diverse developmental roles such as differentiation, cell-cell recognition, embryogenesis and programmed cell death. This chain is Arabinogalactan protein 22, found in Arabidopsis thaliana (Mouse-ear cress).